Consider the following 419-residue polypeptide: Zinc finger protein Pegasus (419 aa).

3 C2H2-type zinc fingers span residues L79–H101, H107–H129, and Y135–H158. Disordered regions lie at residues L203–M255 and S310–Q360. The span at S208–Q228 shows a compositional bias: basic and acidic residues. Composition is skewed to polar residues over residues S310–I320 and E341–Q360. 2 C2H2-type zinc fingers span residues H366–H388 and F394–H418.

It belongs to the Ikaros C2H2-type zinc-finger protein family. As to quaternary structure, probably self-associates.

The protein localises to the nucleus. Its function is as follows. Transcriptional repressor that binds the core 5'GNNTGTNG-3' DNA consensus sequence. The protein is Zinc finger protein Pegasus (ikzf5) of Danio rerio (Zebrafish).